The sequence spans 97 residues: Co-chaperonin GroES (97 aa).

It belongs to the GroES chaperonin family. Heptamer of 7 subunits arranged in a ring. Interacts with the chaperonin GroEL.

The protein resides in the cytoplasm. Together with the chaperonin GroEL, plays an essential role in assisting protein folding. The GroEL-GroES system forms a nano-cage that allows encapsulation of the non-native substrate proteins and provides a physical environment optimized to promote and accelerate protein folding. GroES binds to the apical surface of the GroEL ring, thereby capping the opening of the GroEL channel. The chain is Co-chaperonin GroES from Salmonella agona (strain SL483).